A 71-amino-acid polypeptide reads, in one-letter code: MPSVKVRDTEPFDVALRRFKRACEKAGVLTESRKREFYEKPTWARKRMKAAAVKRLAKRLSRENRRTTRMY.

Belongs to the bacterial ribosomal protein bS21 family.

This is Small ribosomal subunit protein bS21 from Hydrogenovibrio crunogenus (strain DSM 25203 / XCL-2) (Thiomicrospira crunogena).